A 120-amino-acid polypeptide reads, in one-letter code: uncharacterized protein (120 aa).

Residues 22–44 (ITVASCIGAAQGALFSIASALLL) form a helical membrane-spanning segment. A glycan (N-linked (GlcNAc...) asparagine) is linked at N114.

The protein localises to the membrane. This is an uncharacterized protein from Saccharomyces cerevisiae (strain ATCC 204508 / S288c) (Baker's yeast).